A 916-amino-acid chain; its full sequence is Protein translocase subunit SecA (916 aa).

ATP contacts are provided by residues Gln87, 105-109 (GEGKT), and Asp512. Residues 857–916 (QHAEAPSMEQAVAGEEEELPEGPAPVVPLEPVRNEQKIGRNEPCPCGSGKKYKHCHGQLD) form a disordered region. Cys900, Cys902, Cys911, and His912 together coordinate Zn(2+). The segment covering 906 to 916 (KKYKHCHGQLD) has biased composition (basic residues).

This sequence belongs to the SecA family. In terms of assembly, monomer and homodimer. Part of the essential Sec protein translocation apparatus which comprises SecA, SecYEG and auxiliary proteins SecDF-YajC and YidC. Zn(2+) is required as a cofactor.

The protein resides in the cell inner membrane. It localises to the cytoplasm. It carries out the reaction ATP + H2O + cellular proteinSide 1 = ADP + phosphate + cellular proteinSide 2.. In terms of biological role, part of the Sec protein translocase complex. Interacts with the SecYEG preprotein conducting channel. Has a central role in coupling the hydrolysis of ATP to the transfer of proteins into and across the cell membrane, serving both as a receptor for the preprotein-SecB complex and as an ATP-driven molecular motor driving the stepwise translocation of polypeptide chains across the membrane. The sequence is that of Protein translocase subunit SecA from Pseudomonas aeruginosa (strain UCBPP-PA14).